We begin with the raw amino-acid sequence, 66 residues long: Clusterin (66 aa).

Belongs to the clusterin family. Antiparallel disulfide-linked heterodimer of an alpha chain and a beta chain. Self-associates and forms higher oligomers. Interacts with a broad range of misfolded proteins, including APP, APOC2 and LYZ. Slightly acidic pH promotes interaction with misfolded proteins. Forms high-molecular weight oligomers upon interaction with misfolded proteins. Interacts with APOA1, LRP2, CLUAP1 and PON1. Interacts with the complement membrane attack complex. Interacts (via alpha chain) with XRCC6. Interacts with SYVN1, COMMD1, BTRC, CUL1 and with ubiquitin and SCF (SKP1-CUL1-F-box protein) E3 ubiquitin-protein ligase complexes. Interacts (via alpha chain) with BAX in stressed cells, where BAX undergoes a conformation change leading to association with the mitochondrial membrane. Does not interact with BAX in unstressed cells. Found in a complex with LTF, CLU, EPPIN and SEMG1. Interacts (immaturely glycosylated pre-secreted form) with HSPA5; this interaction promotes CLU stability and facilitates stress-induced CLU retrotranslocation from the secretory pathway to the mitochondria, thereby reducing stress-induced apoptosis by stabilizing mitochondrial membrane integrity. Interacts with BCL2L1; this interaction releases and activates BAX and promotes cell death. Interacts with TGFBR2 and ACVR1. Interacts (secreted form) with STMN3; this interaction may act as an important modulator during neuronal differentiation. Component of a epididymal complex at least composed of soluble form of prion protein PRNP, CLU, BPI, CES5A, MANBA and GLB1. In terms of processing, proteolytically cleaved on its way through the secretory system, probably within the Golgi lumen. Proteolytic cleavage is not necessary for its chaperone activity. All non-secreted forms are not proteolytically cleaved. Chaperone activity of uncleaved forms is dependent on a non-reducing environment. Polyubiquitinated, leading to proteasomal degradation. Under cellular stress, the intracellular level of cleaved form is reduced due to proteasomal degradation. Post-translationally, heavily N-glycosylated. About 30% of the protein mass is comprised of complex N-linked carbohydrate. Endoplasmic reticulum (ER) stress induces changes in glycosylation status and increases level of hypoglycosylated forms. Core carbohydrates are essential for chaperone activity. Non-secreted forms are hypoglycosylated or unglycosylated.

It is found in the secreted. Its subcellular location is the nucleus. It localises to the cytoplasm. The protein localises to the mitochondrion membrane. The protein resides in the cytosol. It is found in the microsome. Its subcellular location is the endoplasmic reticulum. It localises to the mitochondrion. The protein localises to the perinuclear region. The protein resides in the cytoplasmic vesicle. It is found in the secretory vesicle. Its subcellular location is the chromaffin granule. Its function is as follows. Functions as extracellular chaperone that prevents aggregation of non native proteins. Prevents stress-induced aggregation of blood plasma proteins. Inhibits formation of amyloid fibrils by APP, APOC2, B2M, CALCA, CSN3, SNCA and aggregation-prone LYZ variants (in vitro). Does not require ATP. Maintains partially unfolded proteins in a state appropriate for subsequent refolding by other chaperones, such as HSPA8/HSC70. Does not refold proteins by itself. Binding to cell surface receptors triggers internalization of the chaperone-client complex and subsequent lysosomal or proteasomal degradation. When secreted, protects cells against apoptosis and against cytolysis by complement: inhibits assembly of the complement membrane attack complex (MAC) by preventing polymerization of C9 pore component of the MAC complex. Intracellular forms interact with ubiquitin and SCF (SKP1-CUL1-F-box protein) E3 ubiquitin-protein ligase complexes and promote the ubiquitination and subsequent proteasomal degradation of target proteins. Promotes proteasomal degradation of COMMD1 and IKBKB. Modulates NF-kappa-B transcriptional activity. Following stress, promotes apoptosis. Inhibits apoptosis when associated with the mitochondrial membrane by interference with BAX-dependent release of cytochrome c into the cytoplasm. Plays a role in the regulation of cell proliferation. An intracellular form suppresses stress-induced apoptosis by stabilizing mitochondrial membrane integrity through interaction with HSPA5. Secreted form does not affect caspase or BAX-mediated intrinsic apoptosis and TNF-induced NF-kappa-B-activity. Secreted form act as an important modulator during neuronal differentiation through interaction with STMN3. Plays a role in the clearance of immune complexes that arise during cell injury. The polypeptide is Clusterin (CLU) (Ovis aries (Sheep)).